Reading from the N-terminus, the 579-residue chain is Fatty-acid amide hydrolase 1 (579 aa).

A helical membrane pass occupies residues 9 to 29; sequence ALSGLSGVCLACSLLSAAVVL. Over 30-403 the chain is Cytoplasmic; sequence RWTRSQTARG…GDFVDPCLGD (374 aa). K142 serves as the catalytic Charge relay system. Residues M191, S217, and 238-241 contribute to the substrate site; that span reads IGGS. S217 acts as the Charge relay system in catalysis. S241 (acyl-ester intermediate) is an active-site residue. S241 carries the phosphoserine modification. The stretch at 404-433 is an intramembrane region; that stretch reads LVLVLKLPRWFKKLLSFLLKPLFPRLAAFL. The Cytoplasmic portion of the chain corresponds to 434–579; that stretch reads NSMCPRSAEK…RLMTPEKRPS (146 aa).

Belongs to the amidase family. Homodimer.

The protein localises to the endoplasmic reticulum membrane. It localises to the golgi apparatus membrane. The catalysed reaction is N-(5Z,8Z,11Z,14Z-eicosatetraenoyl)-ethanolamine + H2O = ethanolamine + (5Z,8Z,11Z,14Z)-eicosatetraenoate. It catalyses the reaction (9Z)-octadecenamide + H2O = (9Z)-octadecenoate + NH4(+). It carries out the reaction 2-(5Z,8Z,11Z,14Z-eicosatetraenoyl)-glycerol + H2O = glycerol + (5Z,8Z,11Z,14Z)-eicosatetraenoate + H(+). The enzyme catalyses N-(9Z-hexadecenoyl) ethanolamine + H2O = (9Z)-hexadecenoate + ethanolamine. The catalysed reaction is N-(9Z-octadecenoyl) ethanolamine + H2O = ethanolamine + (9Z)-octadecenoate. It catalyses the reaction N-octadecanoyl ethanolamine + H2O = octadecanoate + ethanolamine. It carries out the reaction N-docosanoyl-ethanolamine + H2O = docosanoate + ethanolamine. The enzyme catalyses N-tetracosanoyl-taurine + H2O = tetracosanoate + taurine. The catalysed reaction is N-(15Z-tetracosenoyl)-ethanolamine + H2O = (15Z)-tetracosenoate + ethanolamine. It catalyses the reaction N-(9Z-octadecenoyl)-taurine + H2O = taurine + (9Z)-octadecenoate. It carries out the reaction N-docosanoyl-taurine + H2O = docosanoate + taurine. The enzyme catalyses N-(15Z-tetracosenoyl)-taurine + H2O = (15Z)-tetracosenoate + taurine. The catalysed reaction is N-tricosanoyl-taurine + H2O = tricosanoate + taurine. It catalyses the reaction (9Z,12Z,15Z)-octadecatrienamide + H2O = (9Z,12Z,15Z)-octadecatrienoate + NH4(+). It carries out the reaction (5Z,8Z,11Z,14Z)-eicosatetraenamide + H2O = (5Z,8Z,11Z,14Z)-eicosatetraenoate + NH4(+). The enzyme catalyses (6Z)-octadecenamide + H2O = (6Z)-octadecenoate + NH4(+). The catalysed reaction is (15Z)-tetracosenamide + H2O = (15Z)-tetracosenoate + NH4(+). It catalyses the reaction (8Z,11Z,14Z)-eicosatrienamide + H2O = (8Z,11Z,14Z)-eicosatrienoate + NH4(+). It carries out the reaction (11Z,14Z,17Z)-eicosatrienamide + H2O = (11Z,14Z,17Z)-eicosatrienoate + NH4(+). The enzyme catalyses (11Z,14Z)-eicosadienamide + H2O = (11Z,14Z)-eicosadienoate + NH4(+). The catalysed reaction is (9Z,12Z)-octadecadienamide + H2O = (9Z,12Z)-octadecadienoate + NH4(+). It catalyses the reaction tetradecamide + H2O = tetradecanoate + NH4(+). It carries out the reaction 1-O-methyl-(5Z,8Z,11Z,14Z)-eicosatetraenoate + H2O = methanol + (5Z,8Z,11Z,14Z)-eicosatetraenoate + H(+). The enzyme catalyses (11Z)-eicosenamide + H2O = (11Z)-eicosenoate + NH4(+). The catalysed reaction is (9Z)-octadecenoate + glycine = N-(9Z-octadecenoyl)glycine + H2O. It catalyses the reaction N-(5Z,8Z,11Z,14Z)-eicosatetraenoyl-glycine + H2O = (5Z,8Z,11Z,14Z)-eicosatetraenoate + glycine. It carries out the reaction N-(5Z,8Z,11Z,14Z-eicosatetraenoyl)-L-serine + H2O = (5Z,8Z,11Z,14Z)-eicosatetraenoate + L-serine. With respect to regulation, inhibited the trifluoromethyl compound PF-3845. In terms of biological role, catalyzes the hydrolysis of endogenous amidated lipids like the endocannabinoid anandamide (N-(5Z,8Z,11Z,14Z-eicosatetraenoyl)-ethanolamine), as well as other fatty amides such as the taurine-conjugated fatty acids (a structural class of central nervous system (CNS) metabolites), to their corresponding fatty acids, thereby regulating the signaling functions of these molecules. FAAH cooperates with PM20D1 in the hydrolysis of amino acid-conjugated fatty acids such as N-fatty acyl glycine and N-fatty acyl-L-serine, thereby acting as a physiological regulator of specific subsets of intracellular, but not of extracellular, N-fatty acyl amino acids. It can also catalyze the hydrolysis of the endocannabinoid 2-arachidonoylglycerol (2-(5Z,8Z,11Z,14Z-eicosatetraenoyl)-glycerol). The sequence is that of Fatty-acid amide hydrolase 1 (Faah) from Mus musculus (Mouse).